Consider the following 229-residue polypeptide: Cytochrome c oxidase subunit 2 (229 aa).

The Mitochondrial intermembrane segment spans residues 1 to 14 (MANHLQFNFQDATS). The chain crosses the membrane as a helical span at residues 15–45 (PLMQELVKFHDHSLTILFFISALILYVLMMT). Residues 46 to 59 (SLSKLTNKNILDSQ) are Mitochondrial matrix-facing. A helical membrane pass occupies residues 60–87 (EIEMVWTVIPAFILIMLALPSIQILYLM). Over 88 to 229 (DEIASPDITI…FESWIIKLSL (142 aa)) the chain is Mitochondrial intermembrane. Residues histidine 162, cysteine 197, glutamate 199, cysteine 201, histidine 205, and methionine 208 each coordinate Cu cation. Glutamate 199 is a Mg(2+) binding site.

It belongs to the cytochrome c oxidase subunit 2 family. As to quaternary structure, component of the cytochrome c oxidase (complex IV, CIV), a multisubunit enzyme composed of 14 subunits. The complex is composed of a catalytic core of 3 subunits MT-CO1, MT-CO2 and MT-CO3, encoded in the mitochondrial DNA, and 11 supernumerary subunits COX4I, COX5A, COX5B, COX6A, COX6B, COX6C, COX7A, COX7B, COX7C, COX8 and NDUFA4, which are encoded in the nuclear genome. The complex exists as a monomer or a dimer and forms supercomplexes (SCs) in the inner mitochondrial membrane with NADH-ubiquinone oxidoreductase (complex I, CI) and ubiquinol-cytochrome c oxidoreductase (cytochrome b-c1 complex, complex III, CIII), resulting in different assemblies (supercomplex SCI(1)III(2)IV(1) and megacomplex MCI(2)III(2)IV(2)). Found in a complex with TMEM177, COA6, COX18, COX20, SCO1 and SCO2. Interacts with TMEM177 in a COX20-dependent manner. Interacts with COX20. Interacts with COX16. Cu cation serves as cofactor.

The protein resides in the mitochondrion inner membrane. It catalyses the reaction 4 Fe(II)-[cytochrome c] + O2 + 8 H(+)(in) = 4 Fe(III)-[cytochrome c] + 2 H2O + 4 H(+)(out). Component of the cytochrome c oxidase, the last enzyme in the mitochondrial electron transport chain which drives oxidative phosphorylation. The respiratory chain contains 3 multisubunit complexes succinate dehydrogenase (complex II, CII), ubiquinol-cytochrome c oxidoreductase (cytochrome b-c1 complex, complex III, CIII) and cytochrome c oxidase (complex IV, CIV), that cooperate to transfer electrons derived from NADH and succinate to molecular oxygen, creating an electrochemical gradient over the inner membrane that drives transmembrane transport and the ATP synthase. Cytochrome c oxidase is the component of the respiratory chain that catalyzes the reduction of oxygen to water. Electrons originating from reduced cytochrome c in the intermembrane space (IMS) are transferred via the dinuclear copper A center (CU(A)) of subunit 2 and heme A of subunit 1 to the active site in subunit 1, a binuclear center (BNC) formed by heme A3 and copper B (CU(B)). The BNC reduces molecular oxygen to 2 water molecules using 4 electrons from cytochrome c in the IMS and 4 protons from the mitochondrial matrix. The protein is Cytochrome c oxidase subunit 2 (MT-CO2) of Myxine glutinosa (Atlantic hagfish).